We begin with the raw amino-acid sequence, 451 residues long: Bifunctional protein GlmU (451 aa).

Residues 1-225 (MVVVAILAAG…YQEILGINDR (225 aa)) are pyrophosphorylase. Residues 7-10 (LAAG), lysine 21, glutamine 72, and 77-78 (GT) contribute to the UDP-N-acetyl-alpha-D-glucosamine site. Residue aspartate 102 participates in Mg(2+) binding. Positions 139, 154, 169, and 223 each coordinate UDP-N-acetyl-alpha-D-glucosamine. Mg(2+) is bound at residue asparagine 223. The linker stretch occupies residues 226-246 (LQLATAYEILQRRVKEQWMMA). Positions 247-451 (GVTLIDPNSI…LGWRRKSGES (205 aa)) are N-acetyltransferase. Arginine 328 and lysine 346 together coordinate UDP-N-acetyl-alpha-D-glucosamine. Histidine 358 acts as the Proton acceptor in catalysis. Tyrosine 361 and asparagine 372 together coordinate UDP-N-acetyl-alpha-D-glucosamine. Residues alanine 375, 381–382 (NY), serine 400, alanine 418, and arginine 435 each bind acetyl-CoA.

The protein in the N-terminal section; belongs to the N-acetylglucosamine-1-phosphate uridyltransferase family. It in the C-terminal section; belongs to the transferase hexapeptide repeat family. As to quaternary structure, homotrimer. The cofactor is Mg(2+).

The protein localises to the cytoplasm. It catalyses the reaction alpha-D-glucosamine 1-phosphate + acetyl-CoA = N-acetyl-alpha-D-glucosamine 1-phosphate + CoA + H(+). The catalysed reaction is N-acetyl-alpha-D-glucosamine 1-phosphate + UTP + H(+) = UDP-N-acetyl-alpha-D-glucosamine + diphosphate. Its pathway is nucleotide-sugar biosynthesis; UDP-N-acetyl-alpha-D-glucosamine biosynthesis; N-acetyl-alpha-D-glucosamine 1-phosphate from alpha-D-glucosamine 6-phosphate (route II): step 2/2. The protein operates within nucleotide-sugar biosynthesis; UDP-N-acetyl-alpha-D-glucosamine biosynthesis; UDP-N-acetyl-alpha-D-glucosamine from N-acetyl-alpha-D-glucosamine 1-phosphate: step 1/1. It functions in the pathway bacterial outer membrane biogenesis; LPS lipid A biosynthesis. In terms of biological role, catalyzes the last two sequential reactions in the de novo biosynthetic pathway for UDP-N-acetylglucosamine (UDP-GlcNAc). The C-terminal domain catalyzes the transfer of acetyl group from acetyl coenzyme A to glucosamine-1-phosphate (GlcN-1-P) to produce N-acetylglucosamine-1-phosphate (GlcNAc-1-P), which is converted into UDP-GlcNAc by the transfer of uridine 5-monophosphate (from uridine 5-triphosphate), a reaction catalyzed by the N-terminal domain. This is Bifunctional protein GlmU from Nostoc sp. (strain PCC 7120 / SAG 25.82 / UTEX 2576).